Consider the following 310-residue polypeptide: Carbamate kinase 1 (310 aa).

This sequence belongs to the carbamate kinase family.

It localises to the cytoplasm. The enzyme catalyses hydrogencarbonate + NH4(+) + ATP = carbamoyl phosphate + ADP + H2O + H(+). The protein operates within metabolic intermediate metabolism; carbamoyl phosphate degradation; CO(2) and NH(3) from carbamoyl phosphate: step 1/1. This Staphylococcus epidermidis (strain ATCC 12228 / FDA PCI 1200) protein is Carbamate kinase 1 (arcC1).